A 104-amino-acid chain; its full sequence is Pyrimidine/purine nucleoside phosphorylase (104 aa).

It belongs to the nucleoside phosphorylase PpnP family.

It catalyses the reaction a purine D-ribonucleoside + phosphate = a purine nucleobase + alpha-D-ribose 1-phosphate. The enzyme catalyses adenosine + phosphate = alpha-D-ribose 1-phosphate + adenine. It carries out the reaction cytidine + phosphate = cytosine + alpha-D-ribose 1-phosphate. The catalysed reaction is guanosine + phosphate = alpha-D-ribose 1-phosphate + guanine. It catalyses the reaction inosine + phosphate = alpha-D-ribose 1-phosphate + hypoxanthine. The enzyme catalyses thymidine + phosphate = 2-deoxy-alpha-D-ribose 1-phosphate + thymine. It carries out the reaction uridine + phosphate = alpha-D-ribose 1-phosphate + uracil. The catalysed reaction is xanthosine + phosphate = alpha-D-ribose 1-phosphate + xanthine. In terms of biological role, catalyzes the phosphorolysis of diverse nucleosides, yielding D-ribose 1-phosphate and the respective free bases. Can use uridine, adenosine, guanosine, cytidine, thymidine, inosine and xanthosine as substrates. Also catalyzes the reverse reactions. This chain is Pyrimidine/purine nucleoside phosphorylase, found in Syntrophotalea carbinolica (strain DSM 2380 / NBRC 103641 / GraBd1) (Pelobacter carbinolicus).